Here is a 154-residue protein sequence, read N- to C-terminus: Myoglobin (154 aa).

A Globin domain is found at 2-148; that stretch reads ELSDQEWKHV…FRNDMASKYK (147 aa). Histidine 65 lines the nitrite pocket. Residue histidine 65 coordinates O2. Histidine 94 contributes to the heme b binding site.

Belongs to the globin family. In terms of assembly, monomeric.

It localises to the cytoplasm. It is found in the sarcoplasm. It carries out the reaction Fe(III)-heme b-[protein] + nitric oxide + H2O = Fe(II)-heme b-[protein] + nitrite + 2 H(+). The enzyme catalyses H2O2 + AH2 = A + 2 H2O. Its function is as follows. Monomeric heme protein which primary function is to store oxygen and facilitate its diffusion within muscle tissues. Reversibly binds oxygen through a pentacoordinated heme iron and enables its timely and efficient release as needed during periods of heightened demand. Depending on the oxidative conditions of tissues and cells, and in addition to its ability to bind oxygen, it also has a nitrite reductase activity whereby it regulates the production of bioactive nitric oxide. Under stress conditions, like hypoxia and anoxia, it also protects cells against reactive oxygen species thanks to its pseudoperoxidase activity. The chain is Myoglobin (MB) from Alligator mississippiensis (American alligator).